The chain runs to 102 residues: Small ribosomal subunit protein uS10 (102 aa).

This sequence belongs to the universal ribosomal protein uS10 family. In terms of assembly, part of the 30S ribosomal subunit.

Involved in the binding of tRNA to the ribosomes. The chain is Small ribosomal subunit protein uS10 from Exiguobacterium sp. (strain ATCC BAA-1283 / AT1b).